A 122-amino-acid polypeptide reads, in one-letter code: Small ribosomal subunit protein uS13 (122 aa).

Over residues 95 to 116 the composition is skewed to basic residues; it reads GLPCRGQKTKTNARTRKGKKKT. A disordered region spans residues 95-122; that stretch reads GLPCRGQKTKTNARTRKGKKKTVGAATK.

The protein belongs to the universal ribosomal protein uS13 family. Part of the 30S ribosomal subunit. Forms a loose heterodimer with protein S19. Forms two bridges to the 50S subunit in the 70S ribosome.

Located at the top of the head of the 30S subunit, it contacts several helices of the 16S rRNA. In the 70S ribosome it contacts the 23S rRNA (bridge B1a) and protein L5 of the 50S subunit (bridge B1b), connecting the 2 subunits; these bridges are implicated in subunit movement. Contacts the tRNAs in the A and P-sites. The chain is Small ribosomal subunit protein uS13 from Aliarcobacter butzleri (strain RM4018) (Arcobacter butzleri).